The sequence spans 472 residues: Transcriptional activator protein rec16 (472 aa).

The segment at 420 to 444 adopts a C2H2-type zinc-finger fold; the sequence is FICCYCTKPFLSISKLQEHESSCSH.

Its subcellular location is the nucleus. Transcriptional activator that controls the onset of premeiotic DNA synthesis by regulating res2 and some other factor(s) in a mei2 independent cascade. The polypeptide is Transcriptional activator protein rec16 (rec16) (Schizosaccharomyces pombe (strain 972 / ATCC 24843) (Fission yeast)).